A 391-amino-acid polypeptide reads, in one-letter code: Protein NirF (391 aa).

It localises to the cytoplasm. In terms of biological role, required for the biosynthesis of heme d1 of nitrite reductase. Could have a dehydrogenase activity yielding sirohydrochlorin from precorrin-2 or dehydrogenation of propionate side chain C17. This is Protein NirF (nirF) from Stutzerimonas stutzeri (Pseudomonas stutzeri).